Consider the following 562-residue polypeptide: Long-chain-fatty-acid--CoA ligase (562 aa).

It belongs to the ATP-dependent AMP-binding enzyme family. The cofactor is Mg(2+).

The protein localises to the membrane. It catalyses the reaction a long-chain fatty acid + ATP + CoA = a long-chain fatty acyl-CoA + AMP + diphosphate. Its pathway is lipid metabolism; fatty acid beta-oxidation. In terms of biological role, catalyzes the esterification, concomitant with transport, of exogenous long-chain fatty acids into metabolically active CoA thioesters for subsequent degradation or incorporation into phospholipids. In Haemophilus influenzae (strain ATCC 51907 / DSM 11121 / KW20 / Rd), this protein is Long-chain-fatty-acid--CoA ligase (fadD).